A 112-amino-acid polypeptide reads, in one-letter code: Protein lin-52 homolog (112 aa).

Belongs to the lin-52 family. Component of the DREAM complex.

This Danio rerio (Zebrafish) protein is Protein lin-52 homolog (lin52).